A 102-amino-acid chain; its full sequence is UPF0751 protein Dhaf_1351 (102 aa).

It belongs to the UPF0751 family.

This is UPF0751 protein Dhaf_1351 from Desulfitobacterium hafniense (strain DSM 10664 / DCB-2).